A 316-amino-acid chain; its full sequence is tRNA dimethylallyltransferase (316 aa).

An ATP-binding site is contributed by 17–24; sequence GPTASGKT. 19–24 serves as a coordination point for substrate; it reads TASGKT. Interaction with substrate tRNA regions lie at residues 42–45, 166–170, and 247–252; these read DSAL, QRLSR, and RCVGYR.

Belongs to the IPP transferase family. In terms of assembly, monomer. Mg(2+) serves as cofactor.

The enzyme catalyses adenosine(37) in tRNA + dimethylallyl diphosphate = N(6)-dimethylallyladenosine(37) in tRNA + diphosphate. In terms of biological role, catalyzes the transfer of a dimethylallyl group onto the adenine at position 37 in tRNAs that read codons beginning with uridine, leading to the formation of N6-(dimethylallyl)adenosine (i(6)A). The polypeptide is tRNA dimethylallyltransferase (Salmonella schwarzengrund (strain CVM19633)).